The primary structure comprises 307 residues: Aspartate carbamoyltransferase catalytic subunit (307 aa).

Positions 54 and 55 each coordinate carbamoyl phosphate. Lysine 83 provides a ligand contact to L-aspartate. Arginine 104, histidine 132, and glutamine 135 together coordinate carbamoyl phosphate. L-aspartate is bound by residues arginine 165 and arginine 228. Carbamoyl phosphate-binding residues include leucine 267 and proline 268.

This sequence belongs to the aspartate/ornithine carbamoyltransferase superfamily. ATCase family. In terms of assembly, heterododecamer (2C3:3R2) of six catalytic PyrB chains organized as two trimers (C3), and six regulatory PyrI chains organized as three dimers (R2).

The catalysed reaction is carbamoyl phosphate + L-aspartate = N-carbamoyl-L-aspartate + phosphate + H(+). The protein operates within pyrimidine metabolism; UMP biosynthesis via de novo pathway; (S)-dihydroorotate from bicarbonate: step 2/3. Catalyzes the condensation of carbamoyl phosphate and aspartate to form carbamoyl aspartate and inorganic phosphate, the committed step in the de novo pyrimidine nucleotide biosynthesis pathway. In Clostridium perfringens (strain ATCC 13124 / DSM 756 / JCM 1290 / NCIMB 6125 / NCTC 8237 / Type A), this protein is Aspartate carbamoyltransferase catalytic subunit.